The sequence spans 257 residues: MEEQSVNMARLKGEVLPALFASPATIGEYGAGIDGADSLNELSNLMEHGAVAALADKISQIVAKLADADPRKIAEKPTWFEKMLGREVERQVRYQVARKTLDQLLDEAEGVAQRVRDTLRALDDMLNTHEAEVDRLRAYIQAGREFLDENPEAGAAKAGVIEFDKPRERFARKLANLATLMASHEMSVTQMKLTRAQAVDMLDRFSETASVLVPVWRQHTLALITTKNMNPAMVAEAAKAHQALMRSLSQSLEGINQ.

Functionally, belongs to the kla operon, which is associated with cryptic tellurite resistance, and IncW plasmid fertility inhibition. In Escherichia coli, this protein is Protein KlaA (klaA).